The chain runs to 354 residues: Carbonic anhydrase 12 (354 aa).

An N-terminal signal peptide occupies residues 1-24; it reads MPRRSLHAAAVLLLVILKEQPSSP. Residues 25–301 are Extracellular-facing; it reads APVNGSKWTY…VQVCTAAGLS (277 aa). N-linked (GlcNAc...) asparagine glycans are attached at residues N28 and N80. Residues 30-289 form the Alpha-carbonic anhydrase domain; sequence SKWTYFGPDG…FDERLVYTSF (260 aa). A disulfide bridge connects residues C50 and C230. Catalysis depends on H94, which acts as the Proton donor/acceptor. Positions 119, 121, and 145 each coordinate Zn(2+). A glycan (N-linked (GlcNAc...) asparagine) is linked at N162. Residue 226–227 participates in substrate binding; that stretch reads TT. The helical transmembrane segment at 302-322 threads the bilayer; sequence LGIILSLALAGILGICIVVVV. Over 323–354 the chain is Cytoplasmic; sequence SIWLFRRKSIKKGDNKGVIYKPATKMETEAHA.

It belongs to the alpha-carbonic anhydrase family. As to quaternary structure, homodimer. It depends on Zn(2+) as a cofactor. As to expression, highly expressed in colon, kidney, prostate, intestine and activated lymphocytes. Expressed at much higher levels in the renal cell cancers than in surrounding normal kidney tissue. Moderately expressed in pancreas, ovary and testis. Expressed in sweat glands and bronchiolar epithelium.

The protein resides in the membrane. The protein localises to the cell membrane. It catalyses the reaction hydrogencarbonate + H(+) = CO2 + H2O. With respect to regulation, inhibited by coumarins, saccharin, sulfonamide derivatives such as acetazolamide (AZA), benzenesulfonamide and derivatives (4-carboxyethylbenzene-sulfonamide, 4-carboxyethylbenzene-sulfonamide ethyl ester, 4-(acetyl-2-aminoethyl)benzene-sulfonamide, 4-aminoethylbenzene-sulfonamide) and Foscarnet (phosphonoformate trisodium salt). In terms of biological role, reversible hydration of carbon dioxide. In Homo sapiens (Human), this protein is Carbonic anhydrase 12.